The sequence spans 434 residues: Enolase (434 aa).

Glutamine 163 is a (2R)-2-phosphoglycerate binding site. The active-site Proton donor is glutamate 205. Mg(2+)-binding residues include aspartate 242, glutamate 291, and aspartate 318. (2R)-2-phosphoglycerate is bound by residues lysine 343, arginine 372, serine 373, and lysine 394. Lysine 343 functions as the Proton acceptor in the catalytic mechanism.

The protein belongs to the enolase family. The cofactor is Mg(2+).

It is found in the cytoplasm. The protein localises to the secreted. The protein resides in the cell surface. It catalyses the reaction (2R)-2-phosphoglycerate = phosphoenolpyruvate + H2O. The protein operates within carbohydrate degradation; glycolysis; pyruvate from D-glyceraldehyde 3-phosphate: step 4/5. Catalyzes the reversible conversion of 2-phosphoglycerate (2-PG) into phosphoenolpyruvate (PEP). It is essential for the degradation of carbohydrates via glycolysis. The polypeptide is Enolase (Streptococcus sanguinis (strain SK36)).